The chain runs to 214 residues: Protein FAM167A (214 aa).

2 disordered regions span residues 1-26 (MSVP…PDDH) and 59-108 (PFPR…LSTG). A coiled-coil region spans residues 118–156 (EAIAWLRKELTEMRLQDQQLARQLMRLRGDINKLKIEHT).

The protein belongs to the FAM167 (SEC) family. As to expression, expressed in skin, including primary keratinocytes, spleen, kidney, leukocytes, testis, lung, small intestine and prostate.

This is Protein FAM167A (FAM167A) from Homo sapiens (Human).